The primary structure comprises 115 residues: MTTSFYFLLMALGLLLYVCQSSFGNQHTRNSDTPKYRCGSDIPNSYMDLCFRKRNDAGKKRGQASPLWQRGGSLSMLKARAKRNEAFHLQRAHRGVVEHCCYRPCSNAEFKKFCG.

An N-terminal signal peptide occupies residues 1 to 24 (MTTSFYFLLMALGLLLYVCQSSFG). The propeptide occupies 25 to 29 (NQHTR). A 4-hydroxyproline; partial modification is found at P34. 3 disulfides stabilise this stretch: C38-C101, C50-C114, and C100-C105. A propeptide spans 52-94 (RKRNDAGKKRGQASPLWQRGGSLSMLKARAKRNEAFHLQRAHR) (c peptide). The residue at position 98 (E98) is a 4-carboxyglutamate. P104 is subject to 4-hydroxyproline; partial. E109 bears the 4-carboxyglutamate; partial mark. C114 is subject to Cysteine amide.

The protein belongs to the insulin family. As to quaternary structure, heterodimer of A and B chains; disulfide-linked. As to expression, expressed by the venom gland.

It is found in the secreted. Its function is as follows. This venom insulin, from a fish-hunting cone snail, facilitates prey capture by rapidly inducing hypoglycemic shock. It is one of the smallest known insulin found in nature and lacks the C-terminal segment of the B chain that, in human insulin, mediates engagement of the insulin receptor (INSR) and assembly of the hormone's hexameric storage form. Despite lacking this segment, it both binds and activates human insulin receptor (long isoform (HIR-B) of INSR) with a high potency (EC(50)=12.0 nM). In vivo, intraperitoneal injection of this peptide into zebrafish lowers blood glucose with a lower potency than human insulin. In addition, when applied to water, this peptide reduces overall locomotor activity of zebrafish larvae, observed as a significant decrease in the percentage of time spent swimming and movement frequency. When tested on a mouse model of diabetes, this insulin also lowers blood glucose with a 10-fold lower potency than human insulin. This is Con-Ins T1B from Conus tulipa (Fish-hunting cone snail).